Here is a 191-residue protein sequence, read N- to C-terminus: Molybdenum cofactor guanylyltransferase (191 aa).

Residues 13–15 (LAG), Lys-26, Asp-72, and Asp-102 contribute to the GTP site. Asp-102 provides a ligand contact to Mg(2+).

The protein belongs to the MobA family. As to quaternary structure, monomer. The cofactor is Mg(2+).

It is found in the cytoplasm. The catalysed reaction is Mo-molybdopterin + GTP + H(+) = Mo-molybdopterin guanine dinucleotide + diphosphate. Its function is as follows. Transfers a GMP moiety from GTP to Mo-molybdopterin (Mo-MPT) cofactor (Moco or molybdenum cofactor) to form Mo-molybdopterin guanine dinucleotide (Mo-MGD) cofactor. The protein is Molybdenum cofactor guanylyltransferase of Pseudomonas putida (strain ATCC 47054 / DSM 6125 / CFBP 8728 / NCIMB 11950 / KT2440).